The chain runs to 188 residues: dCTP deaminase (188 aa).

Residues Lys111 to Arg116, Thr135 to Glu137, Gln156, Tyr170, and Gln180 each bind dCTP. The active-site Proton donor/acceptor is the Glu137.

This sequence belongs to the dCTP deaminase family. As to quaternary structure, homotrimer.

The catalysed reaction is dCTP + H2O + H(+) = dUTP + NH4(+). Its pathway is pyrimidine metabolism; dUMP biosynthesis; dUMP from dCTP (dUTP route): step 1/2. Functionally, catalyzes the deamination of dCTP to dUTP. This is dCTP deaminase from Pseudomonas putida (strain ATCC 700007 / DSM 6899 / JCM 31910 / BCRC 17059 / LMG 24140 / F1).